The sequence spans 160 residues: MAEVLQSLDALGAANVAAVQPDAPVHVQKLDKYGRAYATGKRKNAVARVWVRPGTGKVTINDRDIEVYFARPVLRLMINQPFQAAAREGQYDVVCTVSGGGLSGQAGAVRHGISKALTYYEPELRSPLKKGGFITRDSRVVERKKYGRAKARRSFQFSKR.

This sequence belongs to the universal ribosomal protein uS9 family.

The sequence is that of Small ribosomal subunit protein uS9 from Xanthobacter autotrophicus (strain ATCC BAA-1158 / Py2).